The following is a 297-amino-acid chain: Methionyl-tRNA formyltransferase (297 aa).

Positions Gln31–Glu52 are disordered. Ser108–Pro111 contributes to the (6S)-5,6,7,8-tetrahydrofolate binding site.

Belongs to the Fmt family.

It catalyses the reaction L-methionyl-tRNA(fMet) + (6R)-10-formyltetrahydrofolate = N-formyl-L-methionyl-tRNA(fMet) + (6S)-5,6,7,8-tetrahydrofolate + H(+). Attaches a formyl group to the free amino group of methionyl-tRNA(fMet). The formyl group appears to play a dual role in the initiator identity of N-formylmethionyl-tRNA by promoting its recognition by IF2 and preventing the misappropriation of this tRNA by the elongation apparatus. The sequence is that of Methionyl-tRNA formyltransferase from Paracoccus denitrificans (strain Pd 1222).